The chain runs to 230 residues: uncharacterized protein (230 aa).

Positions 12–80 (KNLSYVLAEK…PRIGTRVMPQ (69 aa)) constitute an HTH gntR-type domain. A DNA-binding region (H-T-H motif) is located at residues 40 to 59 (EIELGEQFGVSRTAVREAVK).

This is an uncharacterized protein from Escherichia coli (strain K12).